A 540-amino-acid polypeptide reads, in one-letter code: Sterol O-acyltransferase 1 (540 aa).

A disordered region spans residues 1–20 (MSLRNRLSKSGENPEQDEAQ). At 1–128 (MSLRNRLSKS…LDELFEVDHI (128 aa)) the chain is on the cytoplasmic side. Phosphoserine is present on Ser-2. His-127 serves as a coordination point for cholesterol. A helical transmembrane segment spans residues 129-150 (RTIYHMFIALLILFVLSTIVVD). Residues 151–170 (YIDEGRLVLEFNLLAYAFGK) are Lumenal-facing. Residues 171–196 (FPTVIWTWWAMFLSTLSIPYFLFQRW) form a helical membrane-spanning segment. Residues 197 to 208 (AHGYSKSSHPLI) are Cytoplasmic-facing. The chain crosses the membrane as a helical span at residues 209–234 (YSLVHGLLFLVFQLGVLGFVPTYVVL). At 235–242 (AYTLPPAS) the chain is on the lumenal side. The chain crosses the membrane as a helical span at residues 243–266 (RFILILEQIRLIMKAHSFVRENIP). The Cytoplasmic portion of the chain corresponds to 267–309 (RVLNAAKEKSSKDPLPTVNQYLYFLFAPTLIYRDNYPRTPTVR). Residues 310–342 (WGYVAMQFLQVFGCLFYVYYIFERLCAPLFRNI) form a helical membrane-spanning segment. The Lumenal portion of the chain corresponds to 343–359 (KQEPFSARVLVLCVFNS). The chain crosses the membrane as a helical span at residues 360-385 (ILPGVLILFLSFFAFLHCWLNAFAEM). Topologically, residues 386–433 (LRFGDRMFYKDWWNSTSYSNYYRTWNVVVHDWLYYYVYKDLLWFFSKR) are cytoplasmic. Residues 393 to 399 (FYKDWWN) carry the FYXDWWN motif motif. An acyl-CoA-binding residues include Asn-405, Arg-408, Asn-411, His-415, Tyr-423, Lys-435, and Ser-446. Residues 434-458 (FKSAAMLAVFALSAVVHEYALAICL) traverse the membrane as a helical segment. Residue His-450 is part of the active site. Residues 459–464 (SYFYPV) lie on the Lumenal side of the membrane. Residues 465-480 (LFVLFMFFGMAFNFIV) traverse the membrane as a helical segment. Over 481-486 (NDSRKR) the chain is Cytoplasmic. The chain crosses the membrane as a helical span at residues 487–518 (PIWNIMVWASLFLGYGLILCFYSQEWYARQHC). Cys-518 and Cys-536 form a disulfide bridge. The Lumenal segment spans residues 519-540 (PLKNPTFLDYVRPRTWTCRYVF).

The protein belongs to the membrane-bound acyltransferase family. Sterol o-acyltransferase subfamily. May form homo- or heterodimers. Interacts with UBIAD1.

It localises to the endoplasmic reticulum membrane. The enzyme catalyses a sterol + a long-chain fatty acyl-CoA = a long-chain 3-hydroxysterol ester + CoA. The catalysed reaction is cholesterol + an acyl-CoA = a cholesterol ester + CoA. It catalyses the reaction cholesterol + (9Z)-octadecenoyl-CoA = cholesteryl (9Z-octadecenoate) + CoA. It carries out the reaction cholesterol + hexadecanoyl-CoA = cholesteryl hexadecanoate + CoA. The enzyme catalyses octadecanoyl-CoA + cholesterol = cholesteryl octadecanoate + CoA. The catalysed reaction is (9Z,12Z)-octadecadienoyl-CoA + cholesterol = cholesteryl (9Z,12Z)-octadecadienoate + CoA. It catalyses the reaction (5Z,8Z,11Z,14Z)-eicosatetraenoyl-CoA + cholesterol = cholesteryl (5Z,8Z,11Z,14Z)-eicosatetraenoate + CoA. It carries out the reaction (9Z)-hexadecenoyl-CoA + cholesterol = cholesteryl (9Z)-hexadecenoate + CoA. The enzyme catalyses (11Z)-octadecenoyl-CoA + cholesterol = cholesteryl (11Z)-octadecenoate + CoA. The catalysed reaction is (7Z)-octadecenoyl-CoA + cholesterol = cholesteryl (7Z)-octadecenoate + CoA. Functionally, catalyzes the formation of fatty acid-cholesterol esters, which are less soluble in membranes than cholesterol. Plays a role in lipoprotein assembly and dietary cholesterol absorption. Preferentially utilizes oleoyl-CoA ((9Z)-octadecenoyl-CoA) as a substrate: shows a higher activity towards an acyl-CoA substrate with a double bond at the delta-9 position (9Z) than towards saturated acyl-CoA or an unsaturated acyl-CoA with a double bond at the delta-7 (7Z) or delta-11 (11Z) positions. This Mus musculus (Mouse) protein is Sterol O-acyltransferase 1.